The following is a 299-amino-acid chain: uncharacterized protein (299 aa).

Residues 25–45 form a helical membrane-spanning segment; sequence LLYFFKSLAMILFFIFFSLTS.

It localises to the membrane. This is an uncharacterized protein from Rickettsia prowazekii (strain Madrid E).